Reading from the N-terminus, the 264-residue chain is Phosphonoacetaldehyde hydrolase (264 aa).

Asp-9 functions as the Nucleophile in the catalytic mechanism. Residues Asp-9 and Ala-11 each coordinate Mg(2+). The active-site Schiff-base intermediate with substrate is the Lys-50. Asp-183 is a Mg(2+) binding site.

This sequence belongs to the HAD-like hydrolase superfamily. PhnX family. In terms of assembly, homodimer. The cofactor is Mg(2+).

It catalyses the reaction phosphonoacetaldehyde + H2O = acetaldehyde + phosphate + H(+). Its function is as follows. Involved in phosphonate degradation. In Bacillus cereus (strain AH820), this protein is Phosphonoacetaldehyde hydrolase.